The following is a 2179-amino-acid chain: Genome polyprotein (2179 aa).

Disordered regions lie at residues 503-531 (FSKD…PTGD), 623-678 (QPQK…YPIQ), 703-738 (RAKK…GDQF), and 753-847 (EPSV…PPKM). Composition is skewed to polar residues over residues 630-642 (DTPS…QPFH) and 659-678 (TTFA…YPIQ). Positions 758–770 (SEDTSSQSYISTE) are enriched in polar residues. A compositionally biased stretch (low complexity) spans 783–806 (SEESTQLSQLSSSSNDSPENNENT). Over residues 819 to 831 (EISEVEDEVDGMT) the composition is skewed to acidic residues. The CCHC-type zinc finger occupies 1112-1125 (CFTCGKIGHFSRNC). Residue D1226 is the For protease activity; shared with dimeric partner of the active site. A Reverse transcriptase domain is found at 1409-1591 (QQFDLIEPSD…NKIQFLGMDF (183 aa)). Residues D1479, D1542, and D1543 each contribute to the Mg(2+) site. Disordered regions lie at residues 1822–1848 (QRRT…KLSH), 2114–2144 (NIVK…KNKC), and 2160–2179 (YSTK…EPCV). Residues 1827–1840 (SSSTKSKADSSQST) are compositionally biased toward low complexity. Positions 2120–2144 (PRKRKGKAKSRSSTRSEKRRAKNKC) are enriched in basic residues. A compositionally biased stretch (polar residues) spans 2162-2179 (TKPSTPSWTQDSSSEPCV).

It belongs to the Petuviruses genome polyprotein family.

The enzyme catalyses DNA(n) + a 2'-deoxyribonucleoside 5'-triphosphate = DNA(n+1) + diphosphate. Its function is as follows. Encodes presumably for at least four polypeptides: Movement protein (MP), capsid protein (CP), Protease (PR), and reverse transcriptase (RT). The sequence is that of Genome polyprotein from Petunia vein clearing virus (isolate Shepherd) (PVCV).